The following is a 349-amino-acid chain: Nuclear distribution protein nudE homolog 1-A (349 aa).

Residues 22-189 (VAMKYKQCSE…ELAVQQKQEK (168 aa)) are a coiled coil.

The protein belongs to the nudE family. Self-associates. Interacts with pafah1b1. In terms of processing, phosphorylated in mitosis.

It localises to the cytoplasm. The protein localises to the cytoskeleton. The protein resides in the microtubule organizing center. Its subcellular location is the centrosome. It is found in the spindle. It localises to the chromosome. The protein localises to the centromere. The protein resides in the kinetochore. Its subcellular location is the cleavage furrow. It is found in the cytoplasmic vesicle membrane. In terms of biological role, required for centrosome duplication and formation and function of the mitotic spindle. This chain is Nuclear distribution protein nudE homolog 1-A (nde1-a), found in Xenopus laevis (African clawed frog).